We begin with the raw amino-acid sequence, 151 residues long: Phosphopantetheine adenylyltransferase (151 aa).

S9 provides a ligand contact to substrate. ATP-binding positions include 9–10 (SF) and H17. 3 residues coordinate substrate: K41, T73, and R87. ATP is bound by residues 88-90 (GLR), E98, and 122-128 (TSFISSS).

This sequence belongs to the bacterial CoaD family. Homohexamer. It depends on Mg(2+) as a cofactor.

The protein resides in the cytoplasm. The catalysed reaction is (R)-4'-phosphopantetheine + ATP + H(+) = 3'-dephospho-CoA + diphosphate. It participates in cofactor biosynthesis; coenzyme A biosynthesis; CoA from (R)-pantothenate: step 4/5. Its function is as follows. Reversibly transfers an adenylyl group from ATP to 4'-phosphopantetheine, yielding dephospho-CoA (dPCoA) and pyrophosphate. In Flavobacterium psychrophilum (strain ATCC 49511 / DSM 21280 / CIP 103535 / JIP02/86), this protein is Phosphopantetheine adenylyltransferase.